We begin with the raw amino-acid sequence, 38 residues long: Photosystem II reaction center protein L (38 aa).

A helical transmembrane segment spans residues 17-37 (SLFWGLLLIFILAVLFSSYFF).

Belongs to the PsbL family. PSII is composed of 1 copy each of membrane proteins PsbA, PsbB, PsbC, PsbD, PsbE, PsbF, PsbH, PsbI, PsbJ, PsbK, PsbL, PsbM, PsbT, PsbX, PsbY, PsbZ, Psb30/Ycf12, at least 3 peripheral proteins of the oxygen-evolving complex and a large number of cofactors. It forms dimeric complexes.

It localises to the plastid. Its subcellular location is the chloroplast thylakoid membrane. In terms of biological role, one of the components of the core complex of photosystem II (PSII). PSII is a light-driven water:plastoquinone oxidoreductase that uses light energy to abstract electrons from H(2)O, generating O(2) and a proton gradient subsequently used for ATP formation. It consists of a core antenna complex that captures photons, and an electron transfer chain that converts photonic excitation into a charge separation. This subunit is found at the monomer-monomer interface and is required for correct PSII assembly and/or dimerization. In Guillardia theta (Cryptophyte), this protein is Photosystem II reaction center protein L.